The sequence spans 97 residues: Serine protease inhibitor Kazal-type 13 (97 aa).

Residues 1-26 form the signal peptide; it reads MKRSGCWHQRMLLSLVLLTWTHVTFS. Asparagine 33 carries N-linked (GlcNAc...) asparagine glycosylation. The region spanning 36–97 is the Kazal-like domain; that stretch reads RWPKPPCKMY…IQFVKYGKCE (62 aa). Disulfide bonds link cysteine 42–cysteine 78, cysteine 56–cysteine 75, and cysteine 64–cysteine 96.

It is found in the secreted. May be a serine protease inhibitor. Essential for sperm maturation and fertility. Inhibits sperm acrosome reaction, protecting sperm from premature reaction. The chain is Serine protease inhibitor Kazal-type 13 (Spink13) from Mus musculus (Mouse).